The primary structure comprises 537 residues: Efflux pump ustT (537 aa).

The span at 1-25 (MAKEAQSLHELDNMKEKEVDQEKKA) shows a compositional bias: basic and acidic residues. Positions 1–50 (MAKEAQSLHELDNMKEKEVDQEKKAPTSVGDQEEHDDPKKQASHSQNVSE) are disordered. N47 carries an N-linked (GlcNAc...) asparagine glycan. A run of 8 helical transmembrane segments spans residues 71–91 (PLAMAVIMVAISMGMFLVSLL), 104–124 (WVYMSLVFIFVIGSAVGAGAM), 137–157 (GIGLGGVLSGSTILIAENAPL), 162–182 (MFLGILMATMSISAIVGPLIG), 193–213 (WCFILNIPIGGAIIAVLFFFV), 236–256 (LGSALLLPAVVCLILALQWAG), 266–286 (IILLFVFGGLLSIGFVVSQML), and 304–324 (FGSFLFSAMTGGAMLVVTYWI). A glycan (N-linked (GlcNAc...) asparagine) is linked at N333. Transmembrane regions (helical) follow at residues 339–359 (AGIRTIALVLSQAVGAIMGGG), 363–383 (LIGYPPPIMMISATFIAVGAG), 397–417 (WIGYQILMGLGLGFGTQQASL), and 430–450 (TAISLIFFGMQLGGSIFVCIG). N-linked (GlcNAc...) asparagine glycosylation is present at N501. The helical transmembrane segment at 507–527 (TFYVALAAGITSMLSAFLVQW) threads the bilayer.

It belongs to the major facilitator superfamily. TCR/Tet family.

The protein resides in the cell membrane. In terms of biological role, efflux pump; part of the gene cluster that mediates the biosynthesis of ustilaginoidins, dimeric gamma-naphthopyrones isolated from different fungal species. This is Efflux pump ustT from Ustilaginoidea virens (Rice false smut fungus).